The following is a 172-amino-acid chain: Protein GrpE (172 aa).

Residues 1–11 (MSEENNSQNSN) are compositionally biased toward low complexity. A disordered region spans residues 1–22 (MSEENNSQNSNPPNPENGEIAS).

It belongs to the GrpE family. Homodimer.

It localises to the cytoplasm. In terms of biological role, participates actively in the response to hyperosmotic and heat shock by preventing the aggregation of stress-denatured proteins, in association with DnaK and GrpE. It is the nucleotide exchange factor for DnaK and may function as a thermosensor. Unfolded proteins bind initially to DnaJ; upon interaction with the DnaJ-bound protein, DnaK hydrolyzes its bound ATP, resulting in the formation of a stable complex. GrpE releases ADP from DnaK; ATP binding to DnaK triggers the release of the substrate protein, thus completing the reaction cycle. Several rounds of ATP-dependent interactions between DnaJ, DnaK and GrpE are required for fully efficient folding. The sequence is that of Protein GrpE from Bdellovibrio bacteriovorus (strain ATCC 15356 / DSM 50701 / NCIMB 9529 / HD100).